The following is a 407-amino-acid chain: Prolyl hydroxylase EGLN2 (407 aa).

2 stretches are compositionally biased toward low complexity: residues 1–24 (MDSPCQPQPLSQALPQLPGSSSEP) and 57–75 (ASAGSGTPRATATSTTASP). 3 disordered regions span residues 1 to 34 (MDSPCQPQPLSQALPQLPGSSSEPLEPEPGRARM), 50 to 89 (CPGVPSEASAGSGTPRATATSTTASPLRDGFGGQDGGELR), and 108 to 157 (AAQG…CSSG). Positions 89–134 (RPLQSEGAAALVTKGCQRLAAQGARPEAPKRKWAEDGGDAPSPSKR) match the Bipartite nuclear localization signal motif. S130 carries the post-translational modification Phosphoserine. The tract at residues 225-235 (VSQRAIPPRSI) is beta(2)beta(3) 'finger-like' loop. The region spanning 278–376 (GRTKAMVACY…RYAITVWYFD (99 aa)) is the Fe2OG dioxygenase domain. Residues H297, D299, and H358 each coordinate Fe cation. R367 lines the 2-oxoglutarate pocket.

In terms of assembly, interacts (preferably isoform p40) with SIAH2; the interaction targets both SIAH2 isoforms for proteasomal degradation in vitro. Interacts with LIMD1, WTIP and AJUBA. Fe(2+) is required as a cofactor. The cofactor is L-ascorbate. In terms of processing, ubiquitinated by SIAH1 and/or SIAH2 in response to the unfolded protein response (UPR), leading to its degradation. Expressed in adult and fetal heart, brain, liver, lung, skeletal muscle, and kidney. Also expressed in testis and placenta. Highest levels in adult brain, placenta, lung, kidney, and testis. Expressed in hormone responsive tissues, including normal and cancerous mammary, ovarian and prostate epithelium.

It localises to the nucleus. It catalyses the reaction L-prolyl-[protein] + 2-oxoglutarate + O2 = trans-4-hydroxy-L-prolyl-[protein] + succinate + CO2. The enzyme catalyses L-prolyl-[hypoxia-inducible factor alpha subunit] + 2-oxoglutarate + O2 = trans-4-hydroxy-L-prolyl-[hypoxia-inducible factor alpha subunit] + succinate + CO2. In terms of biological role, prolyl hydroxylase that mediates hydroxylation of proline residues in target proteins, such as ATF4, IKBKB, CEP192 and HIF1A. Target proteins are preferentially recognized via a LXXLAP motif. Cellular oxygen sensor that catalyzes, under normoxic conditions, the post-translational formation of 4-hydroxyproline in hypoxia-inducible factor (HIF) alpha proteins. Hydroxylates a specific proline found in each of the oxygen-dependent degradation (ODD) domains (N-terminal, NODD, and C-terminal, CODD) of HIF1A. Also hydroxylates HIF2A. Has a preference for the CODD site for both HIF1A and HIF2A. Hydroxylated HIFs are then targeted for proteasomal degradation via the von Hippel-Lindau ubiquitination complex. Under hypoxic conditions, the hydroxylation reaction is attenuated allowing HIFs to escape degradation resulting in their translocation to the nucleus, heterodimerization with HIF1B, and increased expression of hypoxy-inducible genes. EGLN2 is involved in regulating hypoxia tolerance and apoptosis in cardiac and skeletal muscle. Also regulates susceptibility to normoxic oxidative neuronal death. Links oxygen sensing to cell cycle and primary cilia formation by hydroxylating the critical centrosome component CEP192 which promotes its ubiquitination and subsequent proteasomal degradation. Hydroxylates IKBKB, mediating NF-kappa-B activation in hypoxic conditions. Also mediates hydroxylation of ATF4, leading to decreased protein stability of ATF4. The chain is Prolyl hydroxylase EGLN2 from Homo sapiens (Human).